We begin with the raw amino-acid sequence, 542 residues long: Chaperonin GroEL 2 (542 aa).

ATP is bound by residues 30 to 33 (TLGP), lysine 51, 87 to 91 (DGTTT), glycine 415, and aspartate 496. The tract at residues 523–542 (AEKPKKDGQPQMPPAPGMDF) is disordered. A compositionally biased stretch (pro residues) spans 533–542 (QMPPAPGMDF).

Belongs to the chaperonin (HSP60) family. As to quaternary structure, forms a cylinder of 14 subunits composed of two heptameric rings stacked back-to-back. Interacts with the co-chaperonin GroES.

It is found in the cytoplasm. It carries out the reaction ATP + H2O + a folded polypeptide = ADP + phosphate + an unfolded polypeptide.. Functionally, together with its co-chaperonin GroES, plays an essential role in assisting protein folding. The GroEL-GroES system forms a nano-cage that allows encapsulation of the non-native substrate proteins and provides a physical environment optimized to promote and accelerate protein folding. In Sinorhizobium medicae (strain WSM419) (Ensifer medicae), this protein is Chaperonin GroEL 2.